A 90-amino-acid chain; its full sequence is Bombyxin B-5 (90 aa).

The signal sequence occupies residues Met1–Ser20. 3 cysteine pairs are disulfide-bonded: Cys30-Cys75, Cys42-Cys88, and Cys74-Cys79. A propeptide spans Gly49–Ser64 (c peptide like).

It belongs to the insulin family. As to quaternary structure, heterodimer of a B chain and an A chain linked by two disulfide bonds.

Its subcellular location is the secreted. Brain peptide responsible for activation of prothoracic glands to produce ecdysone in insects. This is Bombyxin B-5 (BBXB5) from Bombyx mori (Silk moth).